The sequence spans 137 residues: Large ribosomal subunit protein uL16 (137 aa).

The protein belongs to the universal ribosomal protein uL16 family. Part of the 50S ribosomal subunit.

Its function is as follows. Binds 23S rRNA and is also seen to make contacts with the A and possibly P site tRNAs. The protein is Large ribosomal subunit protein uL16 of Nitrobacter winogradskyi (strain ATCC 25391 / DSM 10237 / CIP 104748 / NCIMB 11846 / Nb-255).